The sequence spans 348 residues: Phosphatidylglycerophosphate phosphatase 1, chloroplastic/mitochondrial (348 aa).

Residues 1–58 (MQTPSMAASTTSYYPIPKSFLLSPPRHKRNPNLISCSTKPICSPPPPSSSSSSPLQTT) constitute a chloroplast and mitochondrion transit peptide. Residues 17–67 (PKSFLLSPPRHKRNPNLISCSTKPICSPPPPSSSSSSPLQTTTTHRSQKQN) are disordered. Positions 55 to 67 (LQTTTTHRSQKQN) are enriched in polar residues. The Phosphoryl acceptor motif lies at 184-188 (DKDNT).

It belongs to the HAD-like hydrolase superfamily. Requires Mg(2+) as cofactor. In terms of tissue distribution, mainly expressed in inflorescences (especially in pollen) and, to a lower extent, in leaves, stems and siliques, as well as, at low levels, in roots. Mostly expressed in hypocotyl, vasculatures, trichomes, guard cells and stigmas.

The protein resides in the plastid. It localises to the chloroplast. The protein localises to the mitochondrion. It catalyses the reaction a 1,2-diacyl-sn-glycero-3-phospho-(1'-sn-glycero-3'-phosphate) + H2O = a 1,2-diacyl-sn-glycero-3-phospho-(1'-sn-glycerol) + phosphate. Its pathway is phospholipid metabolism; phosphatidylglycerol biosynthesis; phosphatidylglycerol from CDP-diacylglycerol: step 2/2. Functionally, phosphatidylglycerophosphate (PGP) phosphatase involved in the biosynthesis of phosphatidylglycerol (PG), a phosphoglycerolipid predominantly present in chloroplastic thylakoid membranes and which has important photosynthetic function; seems to use PGP 34:3, PGP 34:2 and PGP 34:1 as substrates. Required for thylakoid membranes development and chloroplast function. Necessary for normal cell growth. Required for root growth and columella cells organization. In Arabidopsis thaliana (Mouse-ear cress), this protein is Phosphatidylglycerophosphate phosphatase 1, chloroplastic/mitochondrial.